We begin with the raw amino-acid sequence, 501 residues long: Lysine--tRNA ligase (501 aa).

Glutamate 404 and glutamate 411 together coordinate Mg(2+).

This sequence belongs to the class-II aminoacyl-tRNA synthetase family. Homodimer. Mg(2+) is required as a cofactor.

It localises to the cytoplasm. It carries out the reaction tRNA(Lys) + L-lysine + ATP = L-lysyl-tRNA(Lys) + AMP + diphosphate. The chain is Lysine--tRNA ligase from Campylobacter jejuni (strain RM1221).